Consider the following 65-residue polypeptide: Gallinacin-1 alpha (65 aa).

The first 19 residues, 1-19, serve as a signal peptide directing secretion; that stretch reads MRIVYLLLPFILLLAQGAA. A propeptide spanning residues 20-25 is cleaved from the precursor; it reads GSSQAL. 3 disulfide bridges follow: C31–C59, C38–C53, and C43–C60.

Belongs to the beta-defensin family.

Its subcellular location is the secreted. It localises to the cytoplasmic granule. Its function is as follows. Has bactericidal activity. Potent activity against E.coli ML-35, L.monocytogenes EGD and C.albicans. The chain is Gallinacin-1 alpha from Gallus gallus (Chicken).